The following is a 197-amino-acid chain: 3-isopropylmalate dehydratase small subunit (197 aa).

This sequence belongs to the LeuD family. LeuD type 1 subfamily. As to quaternary structure, heterodimer of LeuC and LeuD.

It carries out the reaction (2R,3S)-3-isopropylmalate = (2S)-2-isopropylmalate. Its pathway is amino-acid biosynthesis; L-leucine biosynthesis; L-leucine from 3-methyl-2-oxobutanoate: step 2/4. Catalyzes the isomerization between 2-isopropylmalate and 3-isopropylmalate, via the formation of 2-isopropylmaleate. This chain is 3-isopropylmalate dehydratase small subunit, found in Azobacteroides pseudotrichonymphae genomovar. CFP2.